A 382-amino-acid polypeptide reads, in one-letter code: GTPase Obg (382 aa).

An Obg domain is found at 2 to 161 (VKFADESKIR…REIIVELNII (160 aa)). Residues 162-328 (ADIGLVGFPN…VKKAFIRLAD (167 aa)) enclose the OBG-type G domain. GTP-binding positions include 168–175 (GFPNAGKS), 193–197 (FTTKI), 215–218 (DIPG), 282–285 (TKLD), and 309–311 (SLY). The Mg(2+) site is built by Ser-175 and Thr-195. Residues 360 to 382 (EEKNDDEHFGATVSLSRKRKPKK) are disordered.

It belongs to the TRAFAC class OBG-HflX-like GTPase superfamily. OBG GTPase family. In terms of assembly, monomer. The cofactor is Mg(2+).

The protein localises to the cytoplasm. Its function is as follows. An essential GTPase which binds GTP, GDP and possibly (p)ppGpp with moderate affinity, with high nucleotide exchange rates and a fairly low GTP hydrolysis rate. Plays a role in control of the cell cycle, stress response, ribosome biogenesis and in those bacteria that undergo differentiation, in morphogenesis control. The protein is GTPase Obg of Treponema denticola (strain ATCC 35405 / DSM 14222 / CIP 103919 / JCM 8153 / KCTC 15104).